The chain runs to 861 residues: Methyltransferase/ribosomally synthesized type III borosin cyclic peptide precursor aboMAa (861 aa).

Residues 1-279 (MSSPAVETKV…AISTFYLPPK (279 aa)) form a methyltransferase domain region. Catalysis depends on residues Arg-100, Tyr-104, and Tyr-126. Residues Tyr-126, His-128, Val-131, Ala-158, Gln-200, Ala-241, Ser-272, and Thr-273 each coordinate S-adenosyl-L-methionine. Residues 280–408 (ALSPLHEESA…GLVRSVMKTS (129 aa)) are clasp domain. A type III-specific C-terminal domain region spans residues 409–799 (PEDVAKQFVQ…PPDLEELPIP (391 aa)). Disordered regions lie at residues 575–596 (NGAF…SSQG) and 772–801 (EAAE…IPDA). Residues 579-593 (PSGGGGGSGGGGGSS) are compositionally biased toward gly residues. A compositionally biased stretch (basic and acidic residues) spans 772–783 (EAAEKDSAVDDE). A compositionally biased stretch (acidic residues) spans 784–797 (KFADEEPPDLEELP). 2 positions are modified to N-methylvaline: Val-805 and Val-807. Tandem repeats lie at residues 805-809 (VDVTD), 810-814 (VDVTD), 815-819 (VDVTD), 820-824 (VDVTD), 825-829 (VDVTD), 830-834 (VDVTD), 835-839 (VDVTD), 840-844 (VDVTD), and 845-849 (VDVTD). The interval 805 to 854 (VDVTDVDVTDVDVTDVDVTDVDVTDVDVTDVDVTDVDVTDVDVTDVDVVD) is 10 X 5 AA tandem repeats of VDVTD. N-methylthreonine is present on Thr-808. Residues Val-810 and Val-812 each carry the N-methylvaline modification. Thr-813 bears the N-methylthreonine mark. Residues Val-815 and Val-817 each carry the N-methylvaline modification. An N-methylthreonine modification is found at Thr-818. An N-methylvaline mark is found at Val-820 and Val-822. Thr-823 carries the post-translational modification N-methylthreonine. N-methylvaline occurs at positions 825 and 827. Thr-828 is subject to N-methylthreonine. N-methylvaline occurs at positions 830 and 832. Thr-833 carries the N-methylthreonine modification. The 10; approximate repeat unit spans residues 850–854 (VDVVD).

It in the N-terminal section; belongs to the precorrin methyltransferase family. AboMA automethylates at Val-805, Val-807, Thr-808, Val-810, Val-812, Thr-813, Val-815, Val-817, Thr-818, Val-820, Val-822, Thr-823, Val-825, Val-827 and Thr-828, Val-830, Val-832 and T-833 before being processed by a prolyloligopeptidase which likely forms a peptidyl ester upon removal of the follower propeptide, which then undergoes macrocyclization with the N-terminus of the modified core peptide. Peptide backbone alpha-N-methylations change the physicochemical properties of amide bonds to provide structural constraints and other favorable characteristics including biological membrane permeability to peptides.

It functions in the pathway secondary metabolite biosynthesis. Its function is as follows. Fusion protein of the methyltransferase aboM and a type III borosin core peptide; part of the gene cluster that mediates the biosynthesis of a type III borosin, a highly methylated cyclic peptide with potent biological activities. Type III borosins derive from the C-terminus of the fusion protein, and it is the same protein that methylates its own C-terminus using S-adenosyl methionine (SAM). The C-terminus is subsequently cleaved off and macrocyclized by a prolyloligopeptidase to give the final product. In Anomoporia bombycina (Polyporus bombycinus), this protein is Methyltransferase/ribosomally synthesized type III borosin cyclic peptide precursor aboMAa.